Consider the following 406-residue polypeptide: Cysteine desulfurase IscS (406 aa).

Pyridoxal 5'-phosphate is bound by residues 75–76 (AT), Asn-155, Gln-183, and 203–205 (SSH). At Lys-206 the chain carries N6-(pyridoxal phosphate)lysine. Thr-243 serves as a coordination point for pyridoxal 5'-phosphate. Cys-330 serves as the catalytic Cysteine persulfide intermediate. Residue Cys-330 coordinates [2Fe-2S] cluster.

Belongs to the class-V pyridoxal-phosphate-dependent aminotransferase family. NifS/IscS subfamily. As to quaternary structure, homodimer. Forms a heterotetramer with IscU, interacts with other sulfur acceptors. Pyridoxal 5'-phosphate is required as a cofactor.

The protein resides in the cytoplasm. It carries out the reaction (sulfur carrier)-H + L-cysteine = (sulfur carrier)-SH + L-alanine. The protein operates within cofactor biosynthesis; iron-sulfur cluster biosynthesis. In terms of biological role, master enzyme that delivers sulfur to a number of partners involved in Fe-S cluster assembly, tRNA modification or cofactor biosynthesis. Catalyzes the removal of elemental sulfur atoms from cysteine to produce alanine. Functions as a sulfur delivery protein for Fe-S cluster synthesis onto IscU, an Fe-S scaffold assembly protein, as well as other S acceptor proteins. This chain is Cysteine desulfurase IscS, found in Haemophilus ducreyi (strain 35000HP / ATCC 700724).